The chain runs to 264 residues: Thiazole synthase (264 aa).

Lysine 106 acts as the Schiff-base intermediate with DXP in catalysis. Residues glycine 167, 193 to 194 (AG), and 215 to 216 (NT) each bind 1-deoxy-D-xylulose 5-phosphate.

The protein belongs to the ThiG family. In terms of assembly, homotetramer. Forms heterodimers with either ThiH or ThiS.

Its subcellular location is the cytoplasm. It catalyses the reaction [ThiS sulfur-carrier protein]-C-terminal-Gly-aminoethanethioate + 2-iminoacetate + 1-deoxy-D-xylulose 5-phosphate = [ThiS sulfur-carrier protein]-C-terminal Gly-Gly + 2-[(2R,5Z)-2-carboxy-4-methylthiazol-5(2H)-ylidene]ethyl phosphate + 2 H2O + H(+). It functions in the pathway cofactor biosynthesis; thiamine diphosphate biosynthesis. In terms of biological role, catalyzes the rearrangement of 1-deoxy-D-xylulose 5-phosphate (DXP) to produce the thiazole phosphate moiety of thiamine. Sulfur is provided by the thiocarboxylate moiety of the carrier protein ThiS. In vitro, sulfur can be provided by H(2)S. In Stenotrophomonas maltophilia (strain R551-3), this protein is Thiazole synthase.